Consider the following 140-residue polypeptide: uncharacterized protein (140 aa).

The protein belongs to the SufE family.

This is an uncharacterized protein from Rhizobium meliloti (strain 1021) (Ensifer meliloti).